A 203-amino-acid polypeptide reads, in one-letter code: Non-histone protein 10 (203 aa).

At Ser2 the chain carries N-acetylserine. 2 disordered regions span residues 78 to 97 (KSKTKRHKVKERDPNMPKRP) and 161 to 203 (ISNI…VSSN). Positions 94 to 158 (PKRPTNAYLL…RYQMEMEIYN (65 aa)) form a DNA-binding region, HMG box.

As to quaternary structure, component of the chromatin-remodeling INO80 complex, at least composed of ARP4, ARP5, ARP8, RVB1, RVB2, TAF14, NHP10, IES1, IES3, IES4, IES6, ACT1, IES2, IES5 and INO80.

The protein localises to the nucleus. In terms of biological role, probably involved in transcription regulation via its interaction with the INO80 complex, a chromatin remodeling complex. This is Non-histone protein 10 (NHP10) from Saccharomyces cerevisiae (strain ATCC 204508 / S288c) (Baker's yeast).